The following is a 257-amino-acid chain: uncharacterized protein (257 aa).

The helical transmembrane segment at 7–27 (LMLGICLVLLIILIVGYVIMT) threads the bilayer.

The protein belongs to the staphylococcal tandem lipoprotein family.

The protein resides in the cell membrane. This is an uncharacterized protein from Staphylococcus aureus (strain Mu50 / ATCC 700699).